We begin with the raw amino-acid sequence, 173 residues long: Archaemetzincin (173 aa).

His-130 is a Zn(2+) binding site. Glu-131 (proton acceptor) is an active-site residue. Residues His-134, His-140, Cys-141, Cys-146, Cys-165, and Cys-168 each coordinate Zn(2+).

It belongs to the peptidase M54 family. As to quaternary structure, monomer. Zn(2+) is required as a cofactor.

Functionally, probable zinc metalloprotease whose natural substrate is unknown. The chain is Archaemetzincin from Haloarcula marismortui (strain ATCC 43049 / DSM 3752 / JCM 8966 / VKM B-1809) (Halobacterium marismortui).